The chain runs to 403 residues: Aspartic protease PEP1 (403 aa).

The first 20 residues, 1–20, serve as a signal peptide directing secretion; that stretch reads MVQISQIGAVLAVCSTLTVA. Residues 21 to 67 constitute a propeptide, activation peptide; it reads APTKGKARFNVPQVAVPMKAVHHPAVAYARALHKFGMKVPKAVSDAA. In terms of domain architecture, Peptidase A1 spans 82–400; sequence YVTQVTVGQG…DTEGPRIGFA (319 aa). The active site involves D98. N-linked (GlcNAc...) asparagine glycans are attached at residues N159 and N270. D293 is an active-site residue. Residues C329 and C361 are joined by a disulfide bond.

The protein belongs to the peptidase A1 family.

The protein resides in the secreted. It catalyses the reaction Hydrolysis of proteins with broad specificity. Generally favors hydrophobic residues in P1 and P1', but also accepts Lys in P1, which leads to activation of trypsinogen. Does not clot milk.. Secreted aspartic endopeptidase that allows assimilation of proteinaceous substrates. Can catalyze hydrolysis of the major structural proteins of basement membrane, elastin, collagen, and laminin. Thought to play a significant role in virulence. The chain is Aspartic protease PEP1 (PEP1) from Arthroderma benhamiae (strain ATCC MYA-4681 / CBS 112371) (Trichophyton mentagrophytes).